The sequence spans 309 residues: Mitogen-activated protein kinase kinase 8 (309 aa).

In terms of domain architecture, Protein kinase spans 53–305 (LDRISVLGSG…ASQLLNHPFL (253 aa)). ATP contacts are provided by residues 59 to 67 (LGSGNGGTV) and K82. D167 acts as the Proton acceptor in catalysis. Phosphoserine occurs at positions 195 and 201. T205 carries the post-translational modification Phosphothreonine.

This sequence belongs to the protein kinase superfamily. STE Ser/Thr protein kinase family. MAP kinase kinase subfamily. Phosphorylation at Ser-195 and Ser-201 by MAP kinase kinase kinases positively regulates kinase activity.

The catalysed reaction is L-seryl-[protein] + ATP = O-phospho-L-seryl-[protein] + ADP + H(+). It carries out the reaction L-threonyl-[protein] + ATP = O-phospho-L-threonyl-[protein] + ADP + H(+). The enzyme catalyses L-tyrosyl-[protein] + ATP = O-phospho-L-tyrosyl-[protein] + ADP + H(+). This Arabidopsis thaliana (Mouse-ear cress) protein is Mitogen-activated protein kinase kinase 8 (MKK8).